A 34-amino-acid polypeptide reads, in one-letter code: NLVDIPIPANDDAIKSIKLIVSKLSTGIQQGQSY.

Belongs to the universal ribosomal protein uS2 family.

It is found in the plastid. Its subcellular location is the chloroplast. This is Small ribosomal subunit protein uS2c (rps2) from Ochrosphaera neapolitana.